The chain runs to 249 residues: Probable septum site-determining protein MinC (249 aa).

The tract at residues 117 to 138 (AVRPPQPPPPPHARAEPAAPVA) is disordered.

It belongs to the MinC family. Interacts with MinD and FtsZ.

Cell division inhibitor that blocks the formation of polar Z ring septums. Rapidly oscillates between the poles of the cell to destabilize FtsZ filaments that have formed before they mature into polar Z rings. Prevents FtsZ polymerization. The chain is Probable septum site-determining protein MinC from Xanthomonas campestris pv. campestris (strain 8004).